A 192-amino-acid polypeptide reads, in one-letter code: Ion-translocating oxidoreductase complex subunit A (192 aa).

A run of 6 helical transmembrane segments spans residues 5 to 25 (ALIL…FLGL), 39 to 59 (TGMG…SYLV), 65 to 85 (APLG…AAVV), 102 to 122 (VLGI…VALL), 134 to 154 (ALYG…FASI), and 171 to 191 (AIAL…IGLV).

This sequence belongs to the NqrDE/RnfAE family. In terms of assembly, the complex is composed of six subunits: RnfA, RnfB, RnfC, RnfD, RnfE and RnfG.

It localises to the cell inner membrane. In terms of biological role, part of a membrane-bound complex that couples electron transfer with translocation of ions across the membrane. This chain is Ion-translocating oxidoreductase complex subunit A, found in Thioalkalivibrio sulfidiphilus (strain HL-EbGR7).